The chain runs to 94 residues: Bacterial microcompartment shell protein PduA (94 aa).

A BMC domain is found at 5–89 (ALGMVETKGL…PHTDVEKILP (85 aa)).

Belongs to the bacterial microcompartments protein family. In terms of assembly, homohexamer with a central pore of about 5.6 Angstroms in diameter. The hexamers pack against each other in arrays. Interacts with the N-terminus of PduP which targets PduP to the BMC. Modeling suggests PduC, PduD, PduE, PduL and PduP interact with a cleft formed by the C-terminal segments of 2 adjacent PduA subunits (on the BMC luminal side) in the hexamer.

Its subcellular location is the bacterial microcompartment. The protein operates within polyol metabolism; 1,2-propanediol degradation. One of the major shell proteins of the bacterial microcompartment (BMC) dedicated to 1,2-propanediol (1,2-PD) degradation. At least one of PduA or PduJ is required for BMC assembly; it must be encoded as the first gene in the pdu operon. Not required for structural integrity of BMCs, it is required to mitigate propionaldehyde toxicity. Controls diffusion of 1,2-PD into and propionaldehyde out of the BMC shell; residue 40 is particularly important for pore permeability. Overexpression of this protein leads to aberrant filaments that extend the length of the cell, cross the cleavage furrow and impair division. The filaments form nanotubes with a hollow center. The isolated BMC shell component protein ratio for J:A:B':B:K:T:U is approximately 15:10:7:6:1:1:2. Edge residues (particularly Lys-26) are important for function and assembly of the BMC, and influence array formation by hexamers. Interaction with PduA allows encapsulation of at least PduP in BMCs. Probably also targets PduD to the BMC. PduA is probably the hub for binding multiple enzymes to the interior of the BMC; modeling suggests PduC, PduD, PduE, PduG, PduL and PduP are targeted to PduA. In terms of biological role, the 1,2-PD-specific bacterial microcompartment (BMC) concentrates low levels of 1,2-PD catabolic enzymes, concentrates volatile reaction intermediates thus enhancing pathway flux and keeps the level of toxic, mutagenic propionaldehyde low. The polypeptide is Bacterial microcompartment shell protein PduA (Salmonella typhimurium (strain LT2 / SGSC1412 / ATCC 700720)).